Reading from the N-terminus, the 704-residue chain is Seven transmembrane domain-containing serine/threonine-protein kinase 2 (704 aa).

At 1-5 (MPSKE) the chain is on the extracellular side. A helical transmembrane segment spans residues 6–26 (FIIPLILLCFYSVNGFVAVIS). Topologically, residues 27-42 (SLVELFIHKASWNSIK) are cytoplasmic. A helical transmembrane segment spans residues 43-63 (IFFYSLLILQCLCRCIIIGWG). Residues 64-76 (MIETVQGGEFYSN) are Extracellular-facing. A helical transmembrane segment spans residues 77 to 97 (FPSLLFISYAGLVALQMIQFL). Residues 98 to 121 (PNDNQYLLLSEGKKNNHKVKVGTN) lie on the Cytoplasmic side of the membrane. The helical transmembrane segment at 122–142 (ILIFFNLFMYFGMFLLFGIAE) threads the bilayer. Topologically, residues 143–185 (KQVGNSTSFNHHGNHNSTTSTSTDEIPLVSTEVGELYLFGDKD) are extracellular. Asn-147 and Asn-158 each carry an N-linked (GlcNAc...) asparagine glycan. Residues 186-206 (PIYIVLDCFYFVCLLLLLIFH) form a helical membrane-spanning segment. The Cytoplasmic segment spans residues 207 to 224 (SYVGWKTYKRNKDLFGIK). Residues 225–245 (LNVIHLILLICIFIRSLLVII) traverse the membrane as a helical segment. Topologically, residues 246-265 (DPSSPNNSILHIDTESWLIY) are extracellular. Asn-251 is a glycosylation site (N-linked (GlcNAc...) asparagine). The helical transmembrane segment at 266-286 (IYTISYYVVGEIIPGMLLIVI) threads the bilayer. At 287–704 (EFLLPYHKRK…WSIEKDSSSK (418 aa)) the chain is on the cytoplasmic side. The 366-residue stretch at 317–682 (IAIHELLGMG…SLGVKFHLAN (366 aa)) folds into the Protein kinase domain. ATP-binding positions include 323-331 (LGMGGSGAM) and Lys-350. Asp-506 functions as the Proton acceptor in the catalytic mechanism.

This sequence belongs to the protein kinase superfamily. Ser/Thr protein kinase family.

The protein resides in the membrane. It carries out the reaction L-seryl-[protein] + ATP = O-phospho-L-seryl-[protein] + ADP + H(+). It catalyses the reaction L-threonyl-[protein] + ATP = O-phospho-L-threonyl-[protein] + ADP + H(+). The chain is Seven transmembrane domain-containing serine/threonine-protein kinase 2 (7tmk2) from Dictyostelium discoideum (Social amoeba).